Reading from the N-terminus, the 851-residue chain is DNA mismatch repair protein MutS (851 aa).

614–621 (GPNMGGKS) lines the ATP pocket.

This sequence belongs to the DNA mismatch repair MutS family.

Functionally, this protein is involved in the repair of mismatches in DNA. It is possible that it carries out the mismatch recognition step. This protein has a weak ATPase activity. This Yersinia enterocolitica serotype O:8 / biotype 1B (strain NCTC 13174 / 8081) protein is DNA mismatch repair protein MutS.